The chain runs to 362 residues: Phosphoserine aminotransferase (362 aa).

Residues serine 9 and arginine 42 each contribute to the L-glutamate site. Pyridoxal 5'-phosphate is bound by residues alanine 76–arginine 77, tryptophan 102, threonine 153, aspartate 174, and glutamine 197. Residue lysine 198 is modified to N6-(pyridoxal phosphate)lysine. Asparagine 239–threonine 240 serves as a coordination point for pyridoxal 5'-phosphate.

Belongs to the class-V pyridoxal-phosphate-dependent aminotransferase family. SerC subfamily. In terms of assembly, homodimer. The cofactor is pyridoxal 5'-phosphate.

It localises to the cytoplasm. It catalyses the reaction O-phospho-L-serine + 2-oxoglutarate = 3-phosphooxypyruvate + L-glutamate. It carries out the reaction 4-(phosphooxy)-L-threonine + 2-oxoglutarate = (R)-3-hydroxy-2-oxo-4-phosphooxybutanoate + L-glutamate. It functions in the pathway amino-acid biosynthesis; L-serine biosynthesis; L-serine from 3-phospho-D-glycerate: step 2/3. Its pathway is cofactor biosynthesis; pyridoxine 5'-phosphate biosynthesis; pyridoxine 5'-phosphate from D-erythrose 4-phosphate: step 3/5. In terms of biological role, catalyzes the reversible conversion of 3-phosphohydroxypyruvate to phosphoserine and of 3-hydroxy-2-oxo-4-phosphonooxybutanoate to phosphohydroxythreonine. The protein is Phosphoserine aminotransferase of Photorhabdus laumondii subsp. laumondii (strain DSM 15139 / CIP 105565 / TT01) (Photorhabdus luminescens subsp. laumondii).